Consider the following 178-residue polypeptide: NADH-quinone oxidoreductase subunit B (178 aa).

The [4Fe-4S] cluster site is built by cysteine 45, cysteine 46, cysteine 111, and cysteine 140.

This sequence belongs to the complex I 20 kDa subunit family. NDH-1 is composed of 15 different subunits. Subunits NuoB, C, D, E, F, and G constitute the peripheral sector of the complex. [4Fe-4S] cluster serves as cofactor.

It localises to the cell membrane. The enzyme catalyses a quinone + NADH + 5 H(+)(in) = a quinol + NAD(+) + 4 H(+)(out). NDH-1 shuttles electrons from NADH, via FMN and iron-sulfur (Fe-S) centers, to quinones in the respiratory chain. The immediate electron acceptor for the enzyme in this species is believed to be a menaquinone. Couples the redox reaction to proton translocation (for every two electrons transferred, four hydrogen ions are translocated across the cytoplasmic membrane), and thus conserves the redox energy in a proton gradient. This Deinococcus geothermalis (strain DSM 11300 / CIP 105573 / AG-3a) protein is NADH-quinone oxidoreductase subunit B.